Here is a 332-residue protein sequence, read N- to C-terminus: Ferredoxin--NADP reductase (332 aa).

6 residues coordinate FAD: glutamate 36, glutamine 44, tyrosine 49, valine 91, phenylalanine 124, and threonine 327.

The protein belongs to the ferredoxin--NADP reductase type 2 family. As to quaternary structure, homodimer. It depends on FAD as a cofactor.

The enzyme catalyses 2 reduced [2Fe-2S]-[ferredoxin] + NADP(+) + H(+) = 2 oxidized [2Fe-2S]-[ferredoxin] + NADPH. This chain is Ferredoxin--NADP reductase, found in Streptococcus thermophilus (strain CNRZ 1066).